The sequence spans 285 residues: Bifunctional protein FolD (285 aa).

NADP(+)-binding positions include 165–167 (GRS) and S190.

The protein belongs to the tetrahydrofolate dehydrogenase/cyclohydrolase family. In terms of assembly, homodimer.

It carries out the reaction (6R)-5,10-methylene-5,6,7,8-tetrahydrofolate + NADP(+) = (6R)-5,10-methenyltetrahydrofolate + NADPH. It catalyses the reaction (6R)-5,10-methenyltetrahydrofolate + H2O = (6R)-10-formyltetrahydrofolate + H(+). Its pathway is one-carbon metabolism; tetrahydrofolate interconversion. In terms of biological role, catalyzes the oxidation of 5,10-methylenetetrahydrofolate to 5,10-methenyltetrahydrofolate and then the hydrolysis of 5,10-methenyltetrahydrofolate to 10-formyltetrahydrofolate. This is Bifunctional protein FolD from Staphylococcus haemolyticus (strain JCSC1435).